Here is a 258-residue protein sequence, read N- to C-terminus: UPF0246 protein VS_0505 (258 aa).

This sequence belongs to the UPF0246 family.

This is UPF0246 protein VS_0505 from Vibrio atlanticus (strain LGP32) (Vibrio splendidus (strain Mel32)).